A 74-amino-acid polypeptide reads, in one-letter code: Large ribosomal subunit protein bL31 (74 aa).

Zn(2+) is bound by residues Cys16, Cys18, Cys38, and Cys41.

It belongs to the bacterial ribosomal protein bL31 family. Type A subfamily. Part of the 50S ribosomal subunit. Zn(2+) is required as a cofactor.

In terms of biological role, binds the 23S rRNA. In Acinetobacter baylyi (strain ATCC 33305 / BD413 / ADP1), this protein is Large ribosomal subunit protein bL31.